Reading from the N-terminus, the 614-residue chain is Aspartate--tRNA ligase (614 aa).

Glutamate 174 contacts L-aspartate. Positions 198–201 are aspartate; the sequence is QLFK. Residue arginine 220 participates in L-aspartate binding. ATP is bound by residues 220-222 and glutamine 229; that span reads RDE. Histidine 448 serves as a coordination point for L-aspartate. ATP is bound at residue glutamate 482. Arginine 489 is an L-aspartate binding site. 534–537 provides a ligand contact to ATP; sequence GLDR.

This sequence belongs to the class-II aminoacyl-tRNA synthetase family. Type 1 subfamily. In terms of assembly, homodimer.

Its subcellular location is the cytoplasm. It carries out the reaction tRNA(Asp) + L-aspartate + ATP = L-aspartyl-tRNA(Asp) + AMP + diphosphate. Catalyzes the attachment of L-aspartate to tRNA(Asp) in a two-step reaction: L-aspartate is first activated by ATP to form Asp-AMP and then transferred to the acceptor end of tRNA(Asp). The chain is Aspartate--tRNA ligase from Lactobacillus acidophilus (strain ATCC 700396 / NCK56 / N2 / NCFM).